The primary structure comprises 458 residues: Fasciclin-like arabinogalactan protein 17 (458 aa).

The first 30 residues, 1 to 30, serve as a signal peptide directing secretion; that stretch reads MDRRIYGGSAVIHLFLFFSVLIFSAASALS. Residues 43–184 form the FAS1 1 domain; sequence NSNSVLVALL…GLIHGIERLL (142 aa). N80 carries N-linked (GlcNAc...) asparagine glycosylation. Residues 207-262 form a disordered region; it reads PEGAPEVDPRTNRLKKPAAPVPAGSPPALPIQSAMAPGPSLAPAPAPGPGGKQHHF. Residues 225–235 are compositionally biased toward pro residues; sequence APVPAGSPPAL. Positions 268-411 constitute an FAS1 2 domain; the sequence is VKDFIHTLLH…ISVQGIDGVL (144 aa). N290 is a glycosylation site (N-linked (GlcNAc...) asparagine).

The protein belongs to the fasciclin-like AGP family.

It is found in the secreted. In terms of biological role, may be a cell surface adhesion protein. The protein is Fasciclin-like arabinogalactan protein 17 (FLA17) of Arabidopsis thaliana (Mouse-ear cress).